The primary structure comprises 177 residues: Adenine phosphoribosyltransferase (177 aa).

This sequence belongs to the purine/pyrimidine phosphoribosyltransferase family. As to quaternary structure, homodimer.

It localises to the cytoplasm. The enzyme catalyses AMP + diphosphate = 5-phospho-alpha-D-ribose 1-diphosphate + adenine. It functions in the pathway purine metabolism; AMP biosynthesis via salvage pathway; AMP from adenine: step 1/1. Catalyzes a salvage reaction resulting in the formation of AMP, that is energically less costly than de novo synthesis. This chain is Adenine phosphoribosyltransferase, found in Leptospira borgpetersenii serovar Hardjo-bovis (strain JB197).